Consider the following 425-residue polypeptide: Glutamate-1-semialdehyde 2,1-aminomutase (425 aa).

An N6-(pyridoxal phosphate)lysine modification is found at Lys264.

Belongs to the class-III pyridoxal-phosphate-dependent aminotransferase family. HemL subfamily. Homodimer. Requires pyridoxal 5'-phosphate as cofactor.

It localises to the cytoplasm. It carries out the reaction (S)-4-amino-5-oxopentanoate = 5-aminolevulinate. It functions in the pathway porphyrin-containing compound metabolism; protoporphyrin-IX biosynthesis; 5-aminolevulinate from L-glutamyl-tRNA(Glu): step 2/2. In Leptospira biflexa serovar Patoc (strain Patoc 1 / Ames), this protein is Glutamate-1-semialdehyde 2,1-aminomutase.